The sequence spans 854 residues: Protein unc-33 (854 aa).

Disordered regions lie at residues 57–114, 130–327, and 794–854; these read ETVS…IPAP, ELFG…DGNG, and VERV…TGFW. Polar residues-rich tracts occupy residues 58-68 and 75-97; these read TVSNKSRSSEG and RPNS…TSAR. Positions 193 to 202 are enriched in basic and acidic residues; it reads KVLRGEKSTP. A compositionally biased stretch (acidic residues) spans 240–257; it reads VDDEEEPEAEAQEMEEPQ. Residues 279 to 298 show a composition bias toward basic and acidic residues; it reads HPSEDGDSTRNGETPTDRRN. Residues 802 to 811 are compositionally biased toward polar residues; sequence SSQQQKPQQN. Over residues 816-827 the composition is skewed to basic and acidic residues; sequence NSGDFDRNRTKV.

The protein belongs to the metallo-dependent hydrolases superfamily. Hydantoinase/dihydropyrimidinase family. In terms of assembly, isoform a: Probable monomer. Isoform b: Probable homodimer. Isoform c: Probable homodimer. Probable heterodimer composed of isoform b and isoform c. Interacts with unc-14 and kinesin-1 motor complex light chain klc-1; both interactions regulate unc-33 neurite localization. Interacts with fln-1 (via calponin-homology (CH) domains and filamin repeat 18-19). Isoform c: Interacts with vab-8 isoform a. In terms of tissue distribution, expressed in ventral cord and nerve ring (at protein level). Isoform a: Expressed in nerve ring (at protein level). Expressed in the nervous system, two amphid socket cells and weakly in non-neuronal pharyngeal cells.

The protein resides in the cell projection. It is found in the axon. It localises to the dendrite. During neurogenesis, plays an essential role in axonal guidance and outgrowth by regulating the polarization of both microtubule and actin cytoskeletons. Establishes the asymmetry of axonal and dendrite microtubules and the polarized sorting of neuronal proteins. This is achieved in part by regulating the localization of kinesin-like protein unc-104. In neurons without a distal microtubule-organizing center (MTOC), also controls the organization of microtubules in dendrites. During the dorso-ventral axonal guidance and outgrowth of VD neurons, required downstream of Rac GTPases ced-10 and mig-2 to inhibit growth cone filopodial protrusion mediated by the unc-6/netrin receptor unc-40-unc-5. Specifically, regulates growth cone filopodial protrusion polarity, and thus migration, by promoting F-actin polarization and by restricting plus-end microtubule accumulation in the growth cone. Probably downstream of mab-20/Sema2a and mab-20 receptor plx-2, regulates the guidance of DD/VD neuron axons by modulating fln-1 interaction with F-actin which results in the remodeling of the actin cytoskeleton. In hermaphrodites, involved in sex myoblast (SM) migration by regulating the gonad-dependent repulsion of SMs. In terms of biological role, in neurons, required for the polarized sorting of axonal proteins. In PLM neuron, regulates innexin unc-9 gap junction turnover by suppressing unc-9 transport out of gap junctions. Plays a role in locomotion and egg-laying. Its function is as follows. In PLM neuron, regulates innexin unc-9 gap junction turnover by suppressing unc-9 transport out of gap junctions. The sequence is that of Protein unc-33 from Caenorhabditis elegans.